The sequence spans 249 residues: Segregation and condensation protein A (249 aa).

It belongs to the ScpA family. In terms of assembly, component of a cohesin-like complex composed of ScpA, ScpB and the Smc homodimer, in which ScpA and ScpB bind to the head domain of Smc. The presence of the three proteins is required for the association of the complex with DNA.

It localises to the cytoplasm. Functionally, participates in chromosomal partition during cell division. May act via the formation of a condensin-like complex containing Smc and ScpB that pull DNA away from mid-cell into both cell halves. The protein is Segregation and condensation protein A of Oceanobacillus iheyensis (strain DSM 14371 / CIP 107618 / JCM 11309 / KCTC 3954 / HTE831).